Reading from the N-terminus, the 266-residue chain is MKLSLSPPPYADAPVVVLISGLGGSGSYWLPQLAVLEQEYQVVCYDQRGTGNNPDTLAEDYSIAQMAAELHQALVAAGIERYAVVGHALGALVGMQLALDYPASVTVLVSVNGWLRINAHTRRCFQVREQLLHSGGAQAWVAAQPLFLYPADWMAARAPRLEAEDALALAHFQGKNNLLRRLNALKRADFSHHADRIRCPVQIICASDDLLVPTACSSELHAALPDSQKMVMRYGGHACNVTDPETFNALLLNGLASLLHHREAAL.

This sequence belongs to the AB hydrolase superfamily. Hydrolase RutD family.

It carries out the reaction carbamate + 2 H(+) = NH4(+) + CO2. Its function is as follows. Involved in pyrimidine catabolism. May facilitate the hydrolysis of carbamate, a reaction that can also occur spontaneously. The protein is Putative carbamate hydrolase RutD of Escherichia coli O7:K1 (strain IAI39 / ExPEC).